The primary structure comprises 102 residues: Monothiol glutaredoxin-S1 (102 aa).

Residues 1–101 (MEKISNLLED…SLLRRAGAIW (101 aa)) enclose the Glutaredoxin domain. C21 is a [2Fe-2S] cluster binding site.

This sequence belongs to the glutaredoxin family. CC-type subfamily.

It is found in the cytoplasm. Its function is as follows. May only reduce GSH-thiol disulfides, but not protein disulfides. The sequence is that of Monothiol glutaredoxin-S1 (GRXS1) from Arabidopsis thaliana (Mouse-ear cress).